The sequence spans 631 residues: Glutamyl-tRNA(Gln) amidotransferase subunit E (631 aa).

The protein belongs to the GatB/GatE family. GatE subfamily. Heterodimer of GatD and GatE.

It catalyses the reaction L-glutamyl-tRNA(Gln) + L-glutamine + ATP + H2O = L-glutaminyl-tRNA(Gln) + L-glutamate + ADP + phosphate + H(+). Its function is as follows. Allows the formation of correctly charged Gln-tRNA(Gln) through the transamidation of misacylated Glu-tRNA(Gln) in organisms which lack glutaminyl-tRNA synthetase. The reaction takes place in the presence of glutamine and ATP through an activated gamma-phospho-Glu-tRNA(Gln). The GatDE system is specific for glutamate and does not act on aspartate. The protein is Glutamyl-tRNA(Gln) amidotransferase subunit E of Methanococcus maripaludis (strain C7 / ATCC BAA-1331).